The primary structure comprises 389 residues: Stilbene synthase 3 (389 aa).

Residue 55–58 participates in substrate binding; sequence KFQR. C164 is a catalytic residue. Residues L267 and 305–307 each bind substrate; that span reads GGR.

It belongs to the thiolase-like superfamily. Chalcone/stilbene synthases family. As to quaternary structure, homodimer.

The protein localises to the cytoplasm. It carries out the reaction 4-coumaroyl-CoA + 3 malonyl-CoA + 3 H(+) = trans-resveratrol + 4 CO2 + 4 CoA. Its pathway is phytoalexin biosynthesis; 3,4',5-trihydroxystilbene biosynthesis; 3,4',5-trihydroxystilbene from trans-4-coumarate: step 2/2. The sequence is that of Stilbene synthase 3 from Arachis hypogaea (Peanut).